The primary structure comprises 363 residues: Aminomethyltransferase (363 aa).

It belongs to the GcvT family. In terms of assembly, the glycine cleavage system is composed of four proteins: P, T, L and H.

It carries out the reaction N(6)-[(R)-S(8)-aminomethyldihydrolipoyl]-L-lysyl-[protein] + (6S)-5,6,7,8-tetrahydrofolate = N(6)-[(R)-dihydrolipoyl]-L-lysyl-[protein] + (6R)-5,10-methylene-5,6,7,8-tetrahydrofolate + NH4(+). The glycine cleavage system catalyzes the degradation of glycine. This is Aminomethyltransferase from Staphylococcus aureus (strain bovine RF122 / ET3-1).